The following is a 126-amino-acid chain: Small ribosomal subunit protein uS13 (126 aa).

The interval 94–126 is disordered; the sequence is RGLPVHGQRTSTNARTRKGPRRAIAGKKKPGKK. Over residues 108–126 the composition is skewed to basic residues; it reads RTRKGPRRAIAGKKKPGKK.

Belongs to the universal ribosomal protein uS13 family. As to quaternary structure, part of the 30S ribosomal subunit. Forms a loose heterodimer with protein S19. Forms two bridges to the 50S subunit in the 70S ribosome.

Its function is as follows. Located at the top of the head of the 30S subunit, it contacts several helices of the 16S rRNA. In the 70S ribosome it contacts the 23S rRNA (bridge B1a) and protein L5 of the 50S subunit (bridge B1b), connecting the 2 subunits; these bridges are implicated in subunit movement. Contacts the tRNAs in the A and P-sites. This Streptomyces avermitilis (strain ATCC 31267 / DSM 46492 / JCM 5070 / NBRC 14893 / NCIMB 12804 / NRRL 8165 / MA-4680) protein is Small ribosomal subunit protein uS13.